The sequence spans 167 residues: Small ribosomal subunit protein uS5 (167 aa).

One can recognise an S5 DRBM domain in the interval 12–75; it reads LQEKLITVNR…EQARRNMITI (64 aa).

The protein belongs to the universal ribosomal protein uS5 family. As to quaternary structure, part of the 30S ribosomal subunit. Contacts proteins S4 and S8.

Functionally, with S4 and S12 plays an important role in translational accuracy. Its function is as follows. Located at the back of the 30S subunit body where it stabilizes the conformation of the head with respect to the body. The chain is Small ribosomal subunit protein uS5 from Buchnera aphidicola subsp. Acyrthosiphon pisum (strain APS) (Acyrthosiphon pisum symbiotic bacterium).